A 558-amino-acid polypeptide reads, in one-letter code: Acylase ACY 1 proenzyme (558 aa).

Catalysis depends on Thr368, which acts as the Nucleophile.

Belongs to the gamma-glutamyltransferase family. In terms of assembly, dimer of two non-identical chains processed from the same precursor.

The enzyme catalyses (7R)-7-(4-carboxybutanamido)cephalosporanate + H2O = (7R)-7-aminocephalosporanate + glutarate. It carries out the reaction an N-terminal (5-L-glutamyl)-[peptide] + an alpha-amino acid = 5-L-glutamyl amino acid + an N-terminal L-alpha-aminoacyl-[peptide]. It catalyses the reaction glutathione + H2O = L-cysteinylglycine + L-glutamate. The catalysed reaction is an S-substituted glutathione + H2O = an S-substituted L-cysteinylglycine + L-glutamate. In terms of biological role, besides the cephalosporin acylase I activity which converts GL-7ACA into 7-ACA; this enzyme displays some gamma glutamyltranspeptidase activity. The chain is Acylase ACY 1 proenzyme (acyI) from Pseudomonas sp. (strain V22).